Reading from the N-terminus, the 512-residue chain is 2-isopropylmalate synthase (512 aa).

The Pyruvate carboxyltransferase domain maps to 5-267 (VVIFDTTLRD…ETSINKSEIY (263 aa)). Mn(2+) is bound by residues D14, H202, H204, and N238. The segment at 391-512 (SLEYLHITSG…LPKAKTERAV (122 aa)) is regulatory domain.

Belongs to the alpha-IPM synthase/homocitrate synthase family. LeuA type 1 subfamily. Homodimer. Requires Mn(2+) as cofactor.

It is found in the cytoplasm. It carries out the reaction 3-methyl-2-oxobutanoate + acetyl-CoA + H2O = (2S)-2-isopropylmalate + CoA + H(+). Its pathway is amino-acid biosynthesis; L-leucine biosynthesis; L-leucine from 3-methyl-2-oxobutanoate: step 1/4. Catalyzes the condensation of the acetyl group of acetyl-CoA with 3-methyl-2-oxobutanoate (2-ketoisovalerate) to form 3-carboxy-3-hydroxy-4-methylpentanoate (2-isopropylmalate). The protein is 2-isopropylmalate synthase of Heliobacterium modesticaldum (strain ATCC 51547 / Ice1).